A 340-amino-acid polypeptide reads, in one-letter code: Adenosine kinase (340 aa).

Residue Asp-293 is part of the active site.

Belongs to the carbohydrate kinase PfkB family. As to quaternary structure, monomer. The cofactor is Mg(2+).

It carries out the reaction adenosine + ATP = AMP + ADP + H(+). It functions in the pathway purine metabolism; AMP biosynthesis via salvage pathway; AMP from adenosine: step 1/1. Its function is as follows. ATP dependent phosphorylation of adenosine and other related nucleoside analogs to monophosphate derivatives. This Dictyostelium discoideum (Social amoeba) protein is Adenosine kinase (adk).